The sequence spans 216 residues: Chaperone protein TorD (216 aa).

The protein belongs to the TorD/DmsD family. TorD subfamily.

It localises to the cytoplasm. In terms of biological role, involved in the biogenesis of TorA. Acts on TorA before the insertion of the molybdenum cofactor and, as a result, probably favors a conformation of the apoenzyme that is competent for acquiring the cofactor. This Ferrimonas balearica (strain DSM 9799 / CCM 4581 / KCTC 23876 / PAT) protein is Chaperone protein TorD.